The following is a 183-amino-acid chain: ATP synthase subunit delta, chloroplastic (183 aa).

Belongs to the ATPase delta chain family. As to quaternary structure, F-type ATPases have 2 components, F(1) - the catalytic core - and F(0) - the membrane proton channel. F(1) has five subunits: alpha(3), beta(3), gamma(1), delta(1), epsilon(1). CF(0) has four main subunits: a(1), b(1), b'(1) and c(10-14). The alpha and beta chains form an alternating ring which encloses part of the gamma chain. F(1) is attached to F(0) by a central stalk formed by the gamma and epsilon chains, while a peripheral stalk is formed by the delta, b and b' chains.

The protein localises to the plastid. It localises to the chloroplast thylakoid membrane. In terms of biological role, f(1)F(0) ATP synthase produces ATP from ADP in the presence of a proton or sodium gradient. F-type ATPases consist of two structural domains, F(1) containing the extramembraneous catalytic core and F(0) containing the membrane proton channel, linked together by a central stalk and a peripheral stalk. During catalysis, ATP synthesis in the catalytic domain of F(1) is coupled via a rotary mechanism of the central stalk subunits to proton translocation. Its function is as follows. This protein is part of the stalk that links CF(0) to CF(1). It either transmits conformational changes from CF(0) to CF(1) or is implicated in proton conduction. The sequence is that of ATP synthase subunit delta, chloroplastic from Cyanidium caldarium (Red alga).